The sequence spans 131 residues: uncharacterized protein (131 aa).

The tract at residues 1–67 (MCSARKLLRG…HSGEPIGDDY (67 aa)) is disordered. Ser-14 carries the post-translational modification Phosphoserine. The chain crosses the membrane as a helical span at residues 99-119 (VVVLFFWLMLWFLGLQALGLV).

The protein belongs to the FAM241 family.

The protein resides in the membrane. This is an uncharacterized protein from Mus musculus (Mouse).